The chain runs to 266 residues: Glutamate racemase (266 aa).

Residues 9–10 (DS) and 41–42 (YG) each bind substrate. The active-site Proton donor/acceptor is Cys-73. A substrate-binding site is contributed by 74-75 (NS). Cys-183 (proton donor/acceptor) is an active-site residue. A substrate-binding site is contributed by 184–185 (TH).

The protein belongs to the aspartate/glutamate racemases family.

The enzyme catalyses L-glutamate = D-glutamate. It functions in the pathway cell wall biogenesis; peptidoglycan biosynthesis. Provides the (R)-glutamate required for cell wall biosynthesis. The polypeptide is Glutamate racemase (Shewanella halifaxensis (strain HAW-EB4)).